A 473-amino-acid polypeptide reads, in one-letter code: MSPQTETKASVGFKAGVKDYKLTYYTPDYETKDTDILAAFRVTPQPGVPPEEAGAAVAAESSTGTWTTVWTDGLTSLDRYKGRCYGIEPVAGEENQYIAYVAYPLDLFEEGSVTNMFTSIVGNVFGFKALRALRLEDLRIPTSYIKTFQGPPHGIQVERDKLNKYGRPLLGCTIKPKLGLSAKNYGRAVYECLRGGLDFTKDDENVNSQPFMRWRDRFLFCAEAIFKSQAETGEIKGHYLNATAGTCEEMIKRAVFARELGVPIVMHDYLTGGFTANTSLAHYCRDNGLLLHIHRAMHAVIDRQKNHGMHFRVLAKALRLSGGDHIHAGTVVGKLEGEREITLGFVDLLRDDYVEKDRSRGIYFTQDWVSLPGVLPVASGGIHVWHMPALTEIFGDDSVLQFGGGTLGHPWGNAPGAVANRVALEACVQARNEGRDLAREGNEIIREASKWSPELAAACEVWKEIKFEFPAMD.

Residues 1–2 constitute a propeptide that is removed on maturation; sequence MS. At P3 the chain carries N-acetylproline. An N6,N6,N6-trimethyllysine modification is found at K14. Positions 123 and 173 each coordinate substrate. K175 functions as the Proton acceptor in the catalytic mechanism. K177 serves as a coordination point for substrate. Mg(2+) is bound by residues K201, D203, and E204. N6-carboxylysine is present on K201. H294 acts as the Proton acceptor in catalysis. Substrate is bound by residues R295, H327, and S379.

The protein belongs to the RuBisCO large chain family. Type I subfamily. In terms of assembly, heterohexadecamer of 8 large chains and 8 small chains; disulfide-linked. The disulfide link is formed within the large subunit homodimers. The cofactor is Mg(2+). Post-translationally, the disulfide bond which can form in the large chain dimeric partners within the hexadecamer appears to be associated with oxidative stress and protein turnover.

The protein localises to the plastid. Its subcellular location is the chloroplast. It carries out the reaction 2 (2R)-3-phosphoglycerate + 2 H(+) = D-ribulose 1,5-bisphosphate + CO2 + H2O. It catalyses the reaction D-ribulose 1,5-bisphosphate + O2 = 2-phosphoglycolate + (2R)-3-phosphoglycerate + 2 H(+). RuBisCO catalyzes two reactions: the carboxylation of D-ribulose 1,5-bisphosphate, the primary event in carbon dioxide fixation, as well as the oxidative fragmentation of the pentose substrate in the photorespiration process. Both reactions occur simultaneously and in competition at the same active site. This Sesbania sesban (Egyptian riverhemp) protein is Ribulose bisphosphate carboxylase large chain.